Consider the following 328-residue polypeptide: D-cysteine desulfhydrase (328 aa).

K51 carries the post-translational modification N6-(pyridoxal phosphate)lysine.

Belongs to the ACC deaminase/D-cysteine desulfhydrase family. In terms of assembly, homodimer. The cofactor is pyridoxal 5'-phosphate.

The enzyme catalyses D-cysteine + H2O = hydrogen sulfide + pyruvate + NH4(+) + H(+). Functionally, catalyzes the alpha,beta-elimination reaction of D-cysteine and of several D-cysteine derivatives. It could be a defense mechanism against D-cysteine. The chain is D-cysteine desulfhydrase from Escherichia coli (strain SMS-3-5 / SECEC).